Reading from the N-terminus, the 1336-residue chain is Immunoglobulin superfamily member 1 (1336 aa).

The signal sequence occupies residues 1-28 (MTLDRPGEGATMLKTFTVLLFCIRMSLG). Residues 29-518 (MTSIVMDPQP…GYLTWNYVLN (490 aa)) are Extracellular-facing. Ig-like C2-type domains lie at 38 to 122 (PELW…KVLE), 137 to 222 (QAET…LVVA), 226 to 312 (PKPT…SDVL), 321 to 408 (PKTW…PSHN), and 419 to 500 (PKPS…HRSE). N-linked (GlcNAc...) asparagine glycosylation occurs at asparagine 53. A disulfide bond links cysteine 58 and cysteine 106. A disulfide bond links cysteine 248 and cysteine 296. N-linked (GlcNAc...) asparagine glycans are attached at residues asparagine 338, asparagine 374, and asparagine 381. 2 cysteine pairs are disulfide-bonded: cysteine 343–cysteine 392 and cysteine 441–cysteine 484. A helical transmembrane segment spans residues 519–539 (EAIRLSLIMQLVALLLVVLWI). Residues 540 to 559 (RWKCRRLRIREAWLLGTAQG) lie on the Cytoplasmic side of the membrane. The chain crosses the membrane as a helical span at residues 560-580 (VTMLFIVTALLCCGLCNGVLI). The Extracellular segment spans residues 581–1336 (EETEIVMPTP…RISVELPVPI (756 aa)). Ig-like C2-type domains lie at 589–677 (TPKP…ALEL), 686–760 (PVIS…RPFK), 777–869 (PKPF…LVVT), 873–958 (PKPT…YLSM), 965–1060 (TDTF…ELLV), 1065–1150 (PKPS…NHSD), and 1161–1242 (PKPS…EPSD). Asparagine 607, asparagine 747, asparagine 798, asparagine 846, asparagine 939, asparagine 986, asparagine 1027, and asparagine 1082 each carry an N-linked (GlcNAc...) asparagine glycan. Cysteine 703 and cysteine 750 form a disulfide bridge. Disulfide bonds link cysteine 799/cysteine 849 and cysteine 895/cysteine 942. A disulfide bridge links cysteine 1087 with cysteine 1134. Residues asparagine 1147 and asparagine 1223 are each glycosylated (N-linked (GlcNAc...) asparagine). A disulfide bridge links cysteine 1183 with cysteine 1226. The tract at residues 1308-1336 (CNQEGEPGTPANSPSSTSQRISVELPVPI) is disordered. A compositionally biased stretch (polar residues) spans 1317 to 1328 (PANSPSSTSQRI).

As to quaternary structure, interacts with INHA. In PubMed:12385827 does not interact with INHA; standard receptor binding assay. Interacts with ACVR1B; the interaction appears to be ligand-dependent as it is diminished by inhibin B and activin A. Interacts with ACVR2A, ACVR2B, ACVRL1 and BMPR1B. Interacts with HECTD1. In terms of tissue distribution, highly expressed in pancreas, testis and fetal liver. Moderately expressed in heart, prostate and small intestine. Expressed at very low levels in brain, thymus, ovary, colon, fetal lung and fetal kidney. Expressed in muscle. Isoform 3 is expressed in pituitary gland.

The protein localises to the membrane. Its subcellular location is the secreted. Seems to be a coreceptor in inhibin signaling, but seems not to be a high-affinity inhibin receptor. Antagonizes activin A signaling in the presence or absence of inhibin B. Necessary to mediate a specific antagonistic effect of inhibin B on activin-stimulated transcription. The chain is Immunoglobulin superfamily member 1 (IGSF1) from Homo sapiens (Human).